The chain runs to 204 residues: Small ribosomal subunit protein uS7 (204 aa).

Position 1 is an N-acetylmethionine (M1). Position 2 is an N-acetylthreonine; in 40S ribosomal protein S5, N-terminally processed (T2). Phosphothreonine is present on T14. Residue K47 is modified to N6-acetyllysine; alternate. Residue K47 forms a Glycyl lysine isopeptide (Lys-Gly) (interchain with G-Cter in SUMO2); alternate linkage. Phosphoserine is present on S142.

The protein belongs to the universal ribosomal protein uS7 family. Component of the small ribosomal subunit. Part of the small subunit (SSU) processome, composed of more than 70 proteins and the RNA chaperone small nucleolar RNA (snoRNA) U3.

It is found in the cytoplasm. Its subcellular location is the nucleus. The protein localises to the nucleolus. In terms of biological role, component of the small ribosomal subunit. The ribosome is a large ribonucleoprotein complex responsible for the synthesis of proteins in the cell. Part of the small subunit (SSU) processome, first precursor of the small eukaryotic ribosomal subunit. During the assembly of the SSU processome in the nucleolus, many ribosome biogenesis factors, an RNA chaperone and ribosomal proteins associate with the nascent pre-rRNA and work in concert to generate RNA folding, modifications, rearrangements and cleavage as well as targeted degradation of pre-ribosomal RNA by the RNA exosome. This is Small ribosomal subunit protein uS7 (RPS5) from Bos taurus (Bovine).